A 591-amino-acid polypeptide reads, in one-letter code: A-type ATP synthase subunit A (591 aa).

Gly-233–Thr-240 contributes to the ATP binding site.

This sequence belongs to the ATPase alpha/beta chains family. Has multiple subunits with at least A(3), B(3), C, D, E, F, H, I and proteolipid K(x).

It localises to the cell membrane. It catalyses the reaction ATP + H2O + 4 H(+)(in) = ADP + phosphate + 5 H(+)(out). Component of the A-type ATP synthase that produces ATP from ADP in the presence of a proton gradient across the membrane. The A chain is the catalytic subunit. This chain is A-type ATP synthase subunit A, found in Metallosphaera sedula (strain ATCC 51363 / DSM 5348 / JCM 9185 / NBRC 15509 / TH2).